The sequence spans 193 residues: Potassium-transporting ATPase KdpC subunit (193 aa).

The helical transmembrane segment at 14 to 34 (ITFTFLVLCGLVYPLIVTGIA) threads the bilayer.

Belongs to the KdpC family. As to quaternary structure, the system is composed of three essential subunits: KdpA, KdpB and KdpC.

It is found in the cell membrane. In terms of biological role, part of the high-affinity ATP-driven potassium transport (or Kdp) system, which catalyzes the hydrolysis of ATP coupled with the electrogenic transport of potassium into the cytoplasm. This subunit acts as a catalytic chaperone that increases the ATP-binding affinity of the ATP-hydrolyzing subunit KdpB by the formation of a transient KdpB/KdpC/ATP ternary complex. This is Potassium-transporting ATPase KdpC subunit from Bacillus cereus (strain ATCC 14579 / DSM 31 / CCUG 7414 / JCM 2152 / NBRC 15305 / NCIMB 9373 / NCTC 2599 / NRRL B-3711).